A 272-amino-acid chain; its full sequence is Acidic leucine-rich nuclear phosphoprotein 32 family member B (272 aa).

LRR repeat units follow at residues 16–40 (PAAV…LTDE), 43–64 (NLEF…PKLP), 65–84 (KLKK…DRLA), and 89–110 (SLTH…EPLK). The 39-residue stretch at 123-161 (CEVTNRSDYRETVFRLLPQLSYLDGYDREDQEAPDSDVE) folds into the LRRCT domain. Over residues 149–254 (DREDQEAPDS…DEDEDEEEEE (106 aa)) the composition is skewed to acidic residues. Residues 149–272 (DREDQEAPDS…RETDDEGEDD (124 aa)) are disordered. Phosphoserine occurs at positions 164 and 171. Over residues 255–265 (SGKGEKRKRET) the composition is skewed to basic and acidic residues. A Nuclear localization signal motif is present at residues 260–263 (KRKR). Residue Thr265 is modified to Phosphothreonine.

This sequence belongs to the ANP32 family. As to quaternary structure, interacts with histones H3 and H4. Interacts with KLF5; this interaction induces promoter region-specific histone incorporation and inhibition of histone acetylation by ANP32B. Post-translationally, some glutamate residues are glycylated by TTLL8. This modification occurs exclusively on glutamate residues and results in a glycine chain on the gamma-carboxyl group. Directly cleaved by caspase-3/CASP3. Predominantly expressed in brain. Expressed in the entire embryonic brain, whereas in the adult brain its expression is restricted to the subventricular zone where there are neural progenitor cells.

Its subcellular location is the nucleus. Functionally, multifunctional protein that is involved in the regulation of many processes including cell proliferation, apoptosis, cell cycle progression or transcription. Regulates the proliferation of neuronal stem cells, differentiation of leukemic cells and progression from G1 to S phase of the cell cycle. As negative regulator of caspase-3-dependent apoptosis, may act as an antagonist of ANP32A in regulating tissue homeostasis. Exhibits histone chaperone properties, able to recruit histones to certain promoters, thus regulating the transcription of specific genes. Also plays an essential role in the nucleocytoplasmic transport of specific mRNAs via the uncommon nuclear mRNA export receptor XPO1/CRM1. Participates in the regulation of adequate adaptive immune responses by acting on mRNA expression and cell proliferation. This Rattus norvegicus (Rat) protein is Acidic leucine-rich nuclear phosphoprotein 32 family member B (Anp32b).